The following is a 349-amino-acid chain: Anthranilate phosphoribosyltransferase (349 aa).

Residues Gly-82, 85–86, Thr-90, 92–95, 110–118, and Gly-122 contribute to the 5-phospho-alpha-D-ribose 1-diphosphate site; these read GD, NVST, and KHGNRSVSS. Gly-82 is an anthranilate binding site. Ser-94 is a binding site for Mg(2+). Anthranilate is bound at residue Asn-113. Residue Arg-168 participates in anthranilate binding. The Mg(2+) site is built by Asp-232 and Glu-233.

Belongs to the anthranilate phosphoribosyltransferase family. In terms of assembly, homodimer. Mg(2+) is required as a cofactor.

The enzyme catalyses N-(5-phospho-beta-D-ribosyl)anthranilate + diphosphate = 5-phospho-alpha-D-ribose 1-diphosphate + anthranilate. It participates in amino-acid biosynthesis; L-tryptophan biosynthesis; L-tryptophan from chorismate: step 2/5. Catalyzes the transfer of the phosphoribosyl group of 5-phosphorylribose-1-pyrophosphate (PRPP) to anthranilate to yield N-(5'-phosphoribosyl)-anthranilate (PRA). The protein is Anthranilate phosphoribosyltransferase of Methanosphaera stadtmanae (strain ATCC 43021 / DSM 3091 / JCM 11832 / MCB-3).